Reading from the N-terminus, the 176-residue chain is Cytochrome b (176 aa).

3 helical membrane-spanning segments follow: residues 33–53, 77–98, and 113–133; these read FGSL…FLAM, WLLR…YLHV, and WNVG…GYVL. Residues His-83 and His-97 each coordinate heme b.

This sequence belongs to the cytochrome b family. The cytochrome bc1 complex contains 11 subunits: 3 respiratory subunits (MT-CYB, CYC1 and UQCRFS1), 2 core proteins (UQCRC1 and UQCRC2) and 6 low-molecular weight proteins (UQCRH/QCR6, UQCRB/QCR7, UQCRQ/QCR8, UQCR10/QCR9, UQCR11/QCR10 and a cleavage product of UQCRFS1). This cytochrome bc1 complex then forms a dimer. Requires heme b as cofactor.

It is found in the mitochondrion inner membrane. In terms of biological role, component of the ubiquinol-cytochrome c reductase complex (complex III or cytochrome b-c1 complex) that is part of the mitochondrial respiratory chain. The b-c1 complex mediates electron transfer from ubiquinol to cytochrome c. Contributes to the generation of a proton gradient across the mitochondrial membrane that is then used for ATP synthesis. This Tadarida brasiliensis (Brazilian free-tailed bat) protein is Cytochrome b (MT-CYB).